The primary structure comprises 126 residues: Glycine cleavage system H protein (126 aa).

Residues 22 to 104 (TVTIGITEYA…YEKAWMVKVE (83 aa)) enclose the Lipoyl-binding domain. At Lys63 the chain carries N6-lipoyllysine.

The protein belongs to the GcvH family. In terms of assembly, the glycine cleavage system is composed of four proteins: P, T, L and H. The cofactor is (R)-lipoate.

The glycine cleavage system catalyzes the degradation of glycine. The H protein shuttles the methylamine group of glycine from the P protein to the T protein. Functionally, is also involved in protein lipoylation via its role as an octanoyl/lipoyl carrier protein intermediate. The protein is Glycine cleavage system H protein of Staphylococcus saprophyticus subsp. saprophyticus (strain ATCC 15305 / DSM 20229 / NCIMB 8711 / NCTC 7292 / S-41).